The following is a 129-amino-acid chain: Protein Turandot A1 (129 aa).

Residues 1 to 21 (MNSSTALMCFALLLISPLCMG) form the signal peptide. Asn49 carries N-linked (GlcNAc...) asparagine glycosylation.

The protein belongs to the Turandot family.

The protein localises to the secreted. A humoral factor that plays a role in stress tolerance; gives increased resistance to the lethal effects of bacterial challenge and stress. Regulated by the JAK/STAT pathway and NF-KB-like Relish pathway in the fat body, upd3 in the hemocytes and Mekk1 in response to septic injury and consequent immune response. The chain is Protein Turandot A1 (TotA1) from Drosophila simulans (Fruit fly).